Here is a 167-residue protein sequence, read N- to C-terminus: Protein-export protein SecB (167 aa).

It belongs to the SecB family. Homotetramer, a dimer of dimers. One homotetramer interacts with 1 SecA dimer.

The protein localises to the cytoplasm. Its function is as follows. One of the proteins required for the normal export of preproteins out of the cell cytoplasm. It is a molecular chaperone that binds to a subset of precursor proteins, maintaining them in a translocation-competent state. It also specifically binds to its receptor SecA. The polypeptide is Protein-export protein SecB (Wolbachia pipientis subsp. Culex pipiens (strain wPip)).